The sequence spans 393 residues: 6-hydroxy-3-succinoylpyridine 3-monooxygenase HspB (393 aa).

FAD-binding positions include 6–35 (RVII…VLEA) and 277–287 (MRNGRVILIGD).

Belongs to the PheA/TfdB FAD monooxygenase family. As to quaternary structure, homodimer. Requires FAD as cofactor.

It carries out the reaction 4-(6-hydroxypyridin-3-yl)-4-oxobutanoate + 2 NADH + O2 + 2 H(+) = 2,5-dihydroxypyridine + succinate semialdehyde + 2 NAD(+) + H2O. Its pathway is alkaloid degradation; nicotine degradation. Inhibited by Cu(2+) and Zn(2+). In terms of biological role, involved in the nicotine degradation. Catalyzes the cleavage of 6-hydroxy-3-succinoylpyridine (HSP) by incorporation of oxygen at the 3-position to produce to 2,5-dihydroxypyridine (DHP) and succinic semialdehyde. The protein is 6-hydroxy-3-succinoylpyridine 3-monooxygenase HspB of Pseudomonas putida (strain DSM 28022 / S16).